Reading from the N-terminus, the 457-residue chain is Argininosuccinate lyase (457 aa).

It belongs to the lyase 1 family. Argininosuccinate lyase subfamily.

It is found in the cytoplasm. The catalysed reaction is 2-(N(omega)-L-arginino)succinate = fumarate + L-arginine. The protein operates within amino-acid biosynthesis; L-arginine biosynthesis; L-arginine from L-ornithine and carbamoyl phosphate: step 3/3. The chain is Argininosuccinate lyase from Citrobacter koseri (strain ATCC BAA-895 / CDC 4225-83 / SGSC4696).